The sequence spans 212 residues: ER lumen protein-retaining receptor 2 (212 aa).

Topologically, residues 1 to 4 (MNIF) are lumenal. Residues 5–24 (RLTGDLSHLAAIIILLLKIW) form a helical membrane-spanning segment. Residues 25 to 32 (KSRSCAGI) lie on the Cytoplasmic side of the membrane. The chain crosses the membrane as a helical span at residues 33 to 52 (SGKSQLLFALVFTTRYLDLF). The interaction with the K-D-E-L motif on target proteins stretch occupies residues 47–48 (RY). The Lumenal portion of the chain corresponds to 53–58 (TSFISL). Residues 59–79 (YNTSMKLIYIACSYATVYLIY) traverse the membrane as a helical segment. Residues 80 to 92 (MKFKATYDGNHDT) are Cytoplasmic-facing. Residues 93–110 (FRVEFLIVPVGGLSFLVN) form a helical membrane-spanning segment. Over 111–116 (HDFSPL) the chain is Lumenal. The chain crosses the membrane as a helical span at residues 117–135 (EILWTFSIYLESVAILPQL). Residues 136–149 (FMISKTGEAETITT) are Cytoplasmic-facing. A helical transmembrane segment spans residues 150-168 (HYLFFLGLYRALYLVNWIW). The interaction with the K-D-E-L motif on target proteins stretch occupies residues 159-169 (RALYLVNWIWR). At 169 to 178 (RYYFEGFFDL) the chain is on the lumenal side. The chain crosses the membrane as a helical span at residues 179–199 (IAVVAGVVQTVLYCDFFYLYV). At 200–212 (TKVLKGKKLSLPA) the chain is on the cytoplasmic side. The important for recycling of cargo proteins with the sequence motif K-D-E-L from the Golgi to the endoplasmic reticulum stretch occupies residues 204–207 (KGKK).

Belongs to the ERD2 family.

It is found in the endoplasmic reticulum membrane. Its subcellular location is the golgi apparatus membrane. It localises to the cytoplasmic vesicle. The protein resides in the COPI-coated vesicle membrane. In terms of biological role, membrane receptor that binds the K-D-E-L sequence motif in the C-terminal part of endoplasmic reticulum resident proteins and maintains their localization in that compartment by participating to their vesicle-mediated recycling back from the Golgi. Binding is pH dependent, and is optimal at pH 5-5.4. The chain is ER lumen protein-retaining receptor 2 (KDELR2) from Gallus gallus (Chicken).